Here is an 874-residue protein sequence, read N- to C-terminus: Leucine--tRNA ligase (874 aa).

The 'HIGH' region signature appears at 43–53; it reads PYPSGRIHIGH. Residues 630–634 carry the 'KMSKS' region motif; it reads KMSKS. An ATP-binding site is contributed by lysine 633.

Belongs to the class-I aminoacyl-tRNA synthetase family.

The protein localises to the cytoplasm. The catalysed reaction is tRNA(Leu) + L-leucine + ATP = L-leucyl-tRNA(Leu) + AMP + diphosphate. The chain is Leucine--tRNA ligase from Bradyrhizobium diazoefficiens (strain JCM 10833 / BCRC 13528 / IAM 13628 / NBRC 14792 / USDA 110).